Reading from the N-terminus, the 445-residue chain is UPF0210 protein SEQ_0468 (445 aa).

Belongs to the UPF0210 family. Homodimer.

This Streptococcus equi subsp. equi (strain 4047) protein is UPF0210 protein SEQ_0468.